We begin with the raw amino-acid sequence, 307 residues long: Small ribosomal subunit biogenesis GTPase RsgA (307 aa).

The region spanning 64 to 229 is the CP-type G domain; that stretch reads KNSLIRPSIA…IADTPGFSSL (166 aa). Residues 113 to 116 and 172 to 180 each bind GTP; these read SKLD and GQTGAGKTT. Residues C253, C258, H260, and C266 each contribute to the Zn(2+) site.

This sequence belongs to the TRAFAC class YlqF/YawG GTPase family. RsgA subfamily. As to quaternary structure, monomer. Associates with 30S ribosomal subunit, binds 16S rRNA. Requires Zn(2+) as cofactor.

The protein resides in the cytoplasm. One of several proteins that assist in the late maturation steps of the functional core of the 30S ribosomal subunit. Helps release RbfA from mature subunits. May play a role in the assembly of ribosomal proteins into the subunit. Circularly permuted GTPase that catalyzes slow GTP hydrolysis, GTPase activity is stimulated by the 30S ribosomal subunit. This is Small ribosomal subunit biogenesis GTPase RsgA from Lactococcus lactis subsp. lactis (strain IL1403) (Streptococcus lactis).